Consider the following 435-residue polypeptide: Probable exopolygalacturonase B (435 aa).

A signal peptide spans 1–15 (MKFFLATLFASAVSS). Residues N59, N184, and N224 are each glycosylated (N-linked (GlcNAc...) asparagine). 5 PbH1 repeats span residues 208–239 (SKDV…DSLN), 240–261 (VDGL…SPKP), 262–283 (NTTN…SMGS), 294–315 (IEHA…RLKA), and 326–347 (INNI…VLDQ). The active-site Proton donor is the D254. Residues C256 and C273 are joined by a disulfide bond. N-linked (GlcNAc...) asparagine glycans are attached at residues N262 and N274. H277 is a catalytic residue. N301, N328, N365, and N373 each carry an N-linked (GlcNAc...) asparagine glycan. A PbH1 6 repeat occupies 366–388 (VTNILFENISGTSSGKNGKVVAD). The cysteines at positions 391 and 397 are disulfide-linked. N406 carries an N-linked (GlcNAc...) asparagine glycan.

It belongs to the glycosyl hydrolase 28 family.

It is found in the secreted. It carries out the reaction [(1-&gt;4)-alpha-D-galacturonosyl](n) + H2O = alpha-D-galacturonate + [(1-&gt;4)-alpha-D-galacturonosyl](n-1). Its function is as follows. Specific in hydrolyzing the terminal glycosidic bond of polygalacturonic acid and oligogalacturonates. This is Probable exopolygalacturonase B (pgxB) from Aspergillus flavus (strain ATCC 200026 / FGSC A1120 / IAM 13836 / NRRL 3357 / JCM 12722 / SRRC 167).